A 232-amino-acid chain; its full sequence is 5'-methylthioadenosine/S-adenosylhomocysteine nucleosidase (232 aa).

The Proton acceptor role is filled by Glu-12. Substrate contacts are provided by residues Gly-78, Ile-152, and 173 to 174 (ME). Catalysis depends on Asp-197, which acts as the Proton donor.

The protein belongs to the PNP/UDP phosphorylase family. MtnN subfamily. As to quaternary structure, homodimer.

The enzyme catalyses S-adenosyl-L-homocysteine + H2O = S-(5-deoxy-D-ribos-5-yl)-L-homocysteine + adenine. The catalysed reaction is S-methyl-5'-thioadenosine + H2O = 5-(methylsulfanyl)-D-ribose + adenine. It catalyses the reaction 5'-deoxyadenosine + H2O = 5-deoxy-D-ribose + adenine. The protein operates within amino-acid biosynthesis; L-methionine biosynthesis via salvage pathway; S-methyl-5-thio-alpha-D-ribose 1-phosphate from S-methyl-5'-thioadenosine (hydrolase route): step 1/2. Functionally, catalyzes the irreversible cleavage of the glycosidic bond in both 5'-methylthioadenosine (MTA) and S-adenosylhomocysteine (SAH/AdoHcy) to adenine and the corresponding thioribose, 5'-methylthioribose and S-ribosylhomocysteine, respectively. Also cleaves 5'-deoxyadenosine, a toxic by-product of radical S-adenosylmethionine (SAM) enzymes, into 5-deoxyribose and adenine. Thus, is required for in vivo function of the radical SAM enzymes biotin synthase and lipoic acid synthase, that are inhibited by 5'-deoxyadenosine accumulation. In Salmonella choleraesuis (strain SC-B67), this protein is 5'-methylthioadenosine/S-adenosylhomocysteine nucleosidase.